The sequence spans 194 residues: Xanthine phosphoribosyltransferase (194 aa).

Positions 20 and 27 each coordinate xanthine. Position 128–132 (128–132 (ANGQA)) interacts with 5-phospho-alpha-D-ribose 1-diphosphate. Lys-156 is a binding site for xanthine.

It belongs to the purine/pyrimidine phosphoribosyltransferase family. Xpt subfamily. As to quaternary structure, homodimer.

The protein resides in the cytoplasm. It carries out the reaction XMP + diphosphate = xanthine + 5-phospho-alpha-D-ribose 1-diphosphate. It participates in purine metabolism; XMP biosynthesis via salvage pathway; XMP from xanthine: step 1/1. In terms of biological role, converts the preformed base xanthine, a product of nucleic acid breakdown, to xanthosine 5'-monophosphate (XMP), so it can be reused for RNA or DNA synthesis. The polypeptide is Xanthine phosphoribosyltransferase (Geobacillus thermodenitrificans (strain NG80-2)).